The following is a 490-amino-acid chain: Betaine aldehyde dehydrogenase (490 aa).

Residues threonine 26 and aspartate 93 each coordinate K(+). 150 to 152 (GAW) lines the NAD(+) pocket. Lysine 162 serves as the catalytic Charge relay system. Position 176–179 (176–179 (KPSE)) interacts with NAD(+). Valine 180 lines the K(+) pocket. 230–233 (GVAT) is an NAD(+) binding site. Leucine 246 lines the K(+) pocket. Catalysis depends on glutamate 252, which acts as the Proton acceptor. NAD(+)-binding residues include glycine 254, cysteine 286, and glutamate 387. Cysteine 286 (nucleophile) is an active-site residue. Cysteine 286 bears the Cysteine sulfenic acid (-SOH) mark. Residues lysine 457 and glycine 460 each contribute to the K(+) site. Glutamate 464 serves as the catalytic Charge relay system.

It belongs to the aldehyde dehydrogenase family. As to quaternary structure, dimer of dimers. The cofactor is K(+).

It catalyses the reaction betaine aldehyde + NAD(+) + H2O = glycine betaine + NADH + 2 H(+). It functions in the pathway amine and polyamine biosynthesis; betaine biosynthesis via choline pathway; betaine from betaine aldehyde: step 1/1. In terms of biological role, involved in the biosynthesis of the osmoprotectant glycine betaine. Catalyzes the irreversible oxidation of betaine aldehyde to the corresponding acid. The sequence is that of Betaine aldehyde dehydrogenase from Stenotrophomonas maltophilia (strain R551-3).